Reading from the N-terminus, the 224-residue chain is Ribonuclease 3 (224 aa).

The RNase III domain maps to 5 to 127; it reads LERLCRRLNY…ILAAIYLDGG (123 aa). Glu40 serves as a coordination point for Mg(2+). Residue Asp44 is part of the active site. Mg(2+) contacts are provided by Asp113 and Glu116. Glu116 is an active-site residue. Positions 154–224 constitute a DRBM domain; the sequence is DAKTQLQEFL…AKAMLEQLQG (71 aa).

This sequence belongs to the ribonuclease III family. In terms of assembly, homodimer. The cofactor is Mg(2+).

The protein localises to the cytoplasm. The enzyme catalyses Endonucleolytic cleavage to 5'-phosphomonoester.. Functionally, digests double-stranded RNA. Involved in the processing of primary rRNA transcript to yield the immediate precursors to the large and small rRNAs (23S and 16S). Processes some mRNAs, and tRNAs when they are encoded in the rRNA operon. Processes pre-crRNA and tracrRNA of type II CRISPR loci if present in the organism. This is Ribonuclease 3 from Legionella pneumophila subsp. pneumophila (strain Philadelphia 1 / ATCC 33152 / DSM 7513).